Reading from the N-terminus, the 100-residue chain is MDPIDPDLEPWKHPGSQPRTVCNNCYCKACCYHCIYCFTKKGLGISYGRKKRTTRRRTAPAGSKNNQDSIPKQPLSQSRGNKEGSEKSTKEVASKTEADQ.

The segment at 1–24 is interaction with human CREBBP; sequence MDPIDPDLEPWKHPGSQPRTVCNN. Residues 1 to 48 form a transactivation region; that stretch reads MDPIDPDLEPWKHPGSQPRTVCNNCYCKACCYHCIYCFTKKGLGISYG. Zn(2+)-binding residues include C22, C25, and C27. Residues 22–37 form a cysteine-rich region; it reads CNNCYCKACCYHCIYC. Residue K28 is modified to N6-acetyllysine; by host PCAF. Zn(2+) contacts are provided by C30, H33, C34, and C37. The interval 38–48 is core; sequence FTKKGLGISYG. The segment covering 48–58 has biased composition (basic residues); that stretch reads GRKKRTTRRRT. The disordered stretch occupies residues 48–100; sequence GRKKRTTRRRTAPAGSKNNQDSIPKQPLSQSRGNKEGSEKSTKEVASKTEADQ. The Nuclear localization signal, RNA-binding (TAR), and protein transduction motif lies at 49–57; that stretch reads RKKRTTRRR. The tract at residues 49–87 is interaction with the host capping enzyme RNGTT; sequence RKKRTTRRRTAPAGSKNNQDSIPKQPLSQSRGNKEGSEK. 2 positions are modified to N6-acetyllysine; by host EP300 and GCN5L2: K50 and K51. An Asymmetric dimethylarginine; by host PRMT6 modification is found at R52. Over residues 63-79 the composition is skewed to polar residues; it reads SKNNQDSIPKQPLSQSR. K72 is covalently cross-linked (Glycyl lysine isopeptide (Lys-Gly) (interchain with G-Cter in ubiquitin)). Over residues 80–100 the composition is skewed to basic and acidic residues; the sequence is GNKEGSEKSTKEVASKTEADQ.

It belongs to the lentiviruses Tat family. In terms of assembly, interacts with host CCNT1. Associates with the P-TEFb complex composed at least of Tat, P-TEFb (CDK9 and CCNT1), TAR RNA, RNA Pol II. Recruits the HATs CREBBP, TAF1/TFIID, EP300, PCAF and GCN5L2. Interacts with host KAT5/Tip60; this interaction targets the latter to degradation. Interacts with the host deacetylase SIRT1. Interacts with host capping enzyme RNGTT; this interaction stimulates RNGTT. Binds to host KDR, and to the host integrins ITGAV/ITGB3 and ITGA5/ITGB1. Interacts with host KPNB1/importin beta-1 without previous binding to KPNA1/importin alpha-1. Interacts with EIF2AK2. Interacts with host nucleosome assembly protein NAP1L1; this interaction may be required for the transport of Tat within the nucleus, since the two proteins interact at the nuclear rim. Interacts with host C1QBP/SF2P32; this interaction involves lysine-acetylated Tat. Interacts with the host chemokine receptors CCR2, CCR3 and CXCR4. Interacts with host DPP4/CD26; this interaction may trigger an anti-proliferative effect. Interacts with host LDLR. Interacts with the host extracellular matrix metalloproteinase MMP1. Interacts with host PRMT6; this interaction mediates Tat's methylation. Interacts with, and is ubiquitinated by MDM2/Hdm2. Interacts with host PSMC3 and HTATIP2. Interacts with STAB1; this interaction may overcome SATB1-mediated repression of IL2 and IL2RA (interleukin) in T cells by binding to the same domain than HDAC1. Interacts (when acetylated) with human CDK13, thereby increasing HIV-1 mRNA splicing and promoting the production of the doubly spliced HIV-1 protein Nef. Interacts with host TBP; this interaction modulates the activity of transcriptional pre-initiation complex. Interacts with host RELA. In terms of processing, asymmetrical arginine methylation by host PRMT6 seems to diminish the transactivation capacity of Tat and affects the interaction with host CCNT1. Post-translationally, acetylation by EP300, CREBBP, GCN5L2/GCN5 and PCAF regulates the transactivation activity of Tat. EP300-mediated acetylation of Lys-50 promotes dissociation of Tat from the TAR RNA through the competitive binding to PCAF's bromodomain. In addition, the non-acetylated Tat's N-terminus can also interact with PCAF. PCAF-mediated acetylation of Lys-28 enhances Tat's binding to CCNT1. Lys-50 is deacetylated by SIRT1. Polyubiquitination by host MDM2 does not target Tat to degradation, but activates its transactivation function and fosters interaction with CCNT1 and TAR RNA. In terms of processing, phosphorylated by EIF2AK2 on serine and threonine residues adjacent to the basic region important for TAR RNA binding and function. Phosphorylation of Tat by EIF2AK2 is dependent on the prior activation of EIF2AK2 by dsRNA.

The protein resides in the host nucleus. It is found in the host nucleolus. Its subcellular location is the host cytoplasm. The protein localises to the secreted. Its function is as follows. Transcriptional activator that increases RNA Pol II processivity, thereby increasing the level of full-length viral transcripts. Recognizes a hairpin structure at the 5'-LTR of the nascent viral mRNAs referred to as the transactivation responsive RNA element (TAR) and recruits the cyclin T1-CDK9 complex (P-TEFb complex) that will in turn hyperphosphorylate the RNA polymerase II to allow efficient elongation. The CDK9 component of P-TEFb and other Tat-activated kinases hyperphosphorylate the C-terminus of RNA Pol II that becomes stabilized and much more processive. Other factors such as HTATSF1/Tat-SF1, SUPT5H/SPT5, and HTATIP2 are also important for Tat's function. Besides its effect on RNA Pol II processivity, Tat induces chromatin remodeling of proviral genes by recruiting the histone acetyltransferases (HATs) CREBBP, EP300 and PCAF to the chromatin. This also contributes to the increase in proviral transcription rate, especially when the provirus integrates in transcriptionally silent region of the host genome. To ensure maximal activation of the LTR, Tat mediates nuclear translocation of NF-kappa-B by interacting with host RELA. Through its interaction with host TBP, Tat may also modulate transcription initiation. Tat can reactivate a latently infected cell by penetrating in it and transactivating its LTR promoter. In the cytoplasm, Tat is thought to act as a translational activator of HIV-1 mRNAs. Functionally, extracellular circulating Tat can be endocytosed by surrounding uninfected cells via the binding to several surface receptors such as CD26, CXCR4, heparan sulfate proteoglycans (HSPG) or LDLR. Neurons are rarely infected, but they internalize Tat via their LDLR. Through its interaction with nuclear HATs, Tat is potentially able to control the acetylation-dependent cellular gene expression. Modulates the expression of many cellular genes involved in cell survival, proliferation or in coding for cytokines or cytokine receptors. Tat plays a role in T-cell and neurons apoptosis. Tat induced neurotoxicity and apoptosis probably contribute to neuroAIDS. Circulating Tat also acts as a chemokine-like and/or growth factor-like molecule that binds to specific receptors on the surface of the cells, affecting many cellular pathways. In the vascular system, Tat binds to ITGAV/ITGB3 and ITGA5/ITGB1 integrins dimers at the surface of endothelial cells and competes with bFGF for heparin-binding sites, leading to an excess of soluble bFGF. This Pan (chimpanzees) protein is Protein Tat.